The sequence spans 310 residues: S-methyl-5'-thioadenosine phosphorylase (310 aa).

Residues Thr20, Arg62–His63, and Ser95–Ala96 contribute to the phosphate site. Met197 serves as a coordination point for substrate. Residue Ser198 coordinates phosphate. A substrate-binding site is contributed by Asp221 to Asp223.

It belongs to the PNP/MTAP phosphorylase family. MTAP subfamily. Homotrimer.

It localises to the cytoplasm. The protein resides in the nucleus. It catalyses the reaction S-methyl-5'-thioadenosine + phosphate = 5-(methylsulfanyl)-alpha-D-ribose 1-phosphate + adenine. It participates in amino-acid biosynthesis; L-methionine biosynthesis via salvage pathway; S-methyl-5-thio-alpha-D-ribose 1-phosphate from S-methyl-5'-thioadenosine (phosphorylase route): step 1/1. In terms of biological role, catalyzes the reversible phosphorylation of S-methyl-5'-thioadenosine (MTA) to adenine and 5-methylthioribose-1-phosphate. Involved in the breakdown of MTA, a major by-product of polyamine biosynthesis. Responsible for the first step in the methionine salvage pathway after MTA has been generated from S-adenosylmethionine. Has broad substrate specificity with 6-aminopurine nucleosides as preferred substrates. This chain is S-methyl-5'-thioadenosine phosphorylase, found in Neurospora crassa (strain ATCC 24698 / 74-OR23-1A / CBS 708.71 / DSM 1257 / FGSC 987).